Reading from the N-terminus, the 289-residue chain is Esterase GA18864 (289 aa).

Over residues 1 to 19 (MTNNDAAVEAPSSSRASSS) the composition is skewed to low complexity. Residues 1–24 (MTNNDAAVEAPSSSRASSSKQQPK) form a disordered region. Catalysis depends on charge relay system residues serine 133, aspartate 191, and histidine 218. Residues 253 to 289 (VSFIESGAEDNDDDGDANDAEVAAATAAAGSDLDDSD) form a disordered region. Residues 259–271 (GAEDNDDDGDAND) are compositionally biased toward acidic residues. Positions 272–283 (AEVAAATAAAGS) are enriched in low complexity.

The protein belongs to the LovG family.

In Drosophila pseudoobscura pseudoobscura (Fruit fly), this protein is Esterase GA18864.